Here is an 826-residue protein sequence, read N- to C-terminus: Villin-1 (826 aa).

The tract at residues 1 to 734 is core; the sequence is MVELSKKVTG…YDELKAELGD (734 aa). The Gelsolin-like 1 repeat unit spans residues 27 to 76; that stretch reads MEMVPVPTKSYGNFYEGDCYVLLSTRKTGSGFSYNIHYWLGKNSSQDEQG. 112–119 is a binding site for a 1,2-diacyl-sn-glycero-3-phospho-(1D-myo-inositol-4,5-bisphosphate); that stretch reads KQGLIYKQ. A crucial for binding an actin filament region spans residues 129-137; it reads VETNTYNVQ. A 1,2-diacyl-sn-glycero-3-phospho-(1D-myo-inositol-4,5-bisphosphate) is bound at residue 138–146; it reads RLLHVKGKK. Gelsolin-like repeat units follow at residues 148–188, 265–309, 408–457, 528–568, and 631–672; these read VVAA…AERL, LVIQ…EEKQ, QELV…DELA, TKAF…DERE, and FLAT…SEKE. The interval 735-826 is headpiece; that stretch reads NASIGQLVSG…QNLKKEKGLF (92 aa). Residues 760–826 enclose the HP domain; it reads PTKLETFPLD…QNLKKEKGLF (67 aa). Positions 820–823 are absolutely required for activity; that stretch reads KKEK.

This sequence belongs to the villin/gelsolin family. Monomer. Homodimer. Associates with F-actin; the association with F-actin is inhibited by tropomyosin. Post-translationally, phosphorylated on tyrosine residues. The unphosphorylated form increases the initial rate of actin-nucleating activity, whereas the tyrosine-phosphorylated form inhibits actin-nucleating activity, enhances actin-bundling activity and enhances actin-severing activity by reducing high Ca(2+) requirements. The tyrosine-phosphorylated form does not regulate actin-capping activity. Tyrosine phosphorylation is essential for cell migration: tyrosine phosphorylation sites in the N-terminus half regulate actin reorganization and cell morphology, whereas tyrosine phosphorylation sites in the C-terminus half regulate cell migration. Tyrosine phosphorylation is induced by epidermal growth factor (EGF) and stimulates cell migration. Specifically expressed in epithelial cells. Component of brush border microvilli.

It is found in the cytoplasm. It localises to the cytoskeleton. Its subcellular location is the cell projection. The protein localises to the microvillus. The protein resides in the lamellipodium. It is found in the ruffle. It localises to the filopodium tip. Its subcellular location is the filopodium. In terms of biological role, epithelial cell-specific Ca(2+)-regulated actin-modifying protein that modulates the reorganization of microvillar actin filaments. Plays a role in the actin nucleation, actin filament bundle assembly, actin filament capping and severing. Binds phosphatidylinositol 4,5-bisphosphate (PIP2) and lysophosphatidic acid (LPA); binds LPA with higher affinity than PIP2. Binding to LPA increases its phosphorylation by SRC and inhibits all actin-modifying activities. Binding to PIP2 inhibits actin-capping and -severing activities but enhances actin-bundling activity. Regulates the intestinal epithelial cell morphology, cell invasion, cell migration and apoptosis. Protects against apoptosis induced by dextran sodium sulfate (DSS) in the gastrointestinal epithelium. Appears to regulate cell death by maintaining mitochondrial integrity. Enhances hepatocyte growth factor (HGF)-induced epithelial cell motility, chemotaxis and wound repair. Its actin-bundling activity is inhibited by tropomyosin. The protein is Villin-1 (VIL1) of Gallus gallus (Chicken).